Consider the following 237-residue polypeptide: AA9 family lytic polysaccharide monooxygenase C (237 aa).

Positions 1 to 15 (MKVLAPLILAGAASA) are cleaved as a signal peptide. Residues His16 and His99 each coordinate Cu(2+). 2 cysteine pairs are disulfide-bonded: Cys54–Cys185 and Cys155–Cys237. N-linked (GlcNAc...) asparagine glycosylation is present at Asn112. His171 and Gln180 together coordinate O2. A Cu(2+)-binding site is contributed by Tyr182.

Belongs to the polysaccharide monooxygenase AA9 family. Cu(2+) is required as a cofactor.

The protein localises to the secreted. The enzyme catalyses [(1-&gt;4)-beta-D-glucosyl]n+m + reduced acceptor + O2 = 4-dehydro-beta-D-glucosyl-[(1-&gt;4)-beta-D-glucosyl]n-1 + [(1-&gt;4)-beta-D-glucosyl]m + acceptor + H2O.. With respect to regulation, is able to utilize various natural phenolic compounds as reducing agents. Most of these reducing agents are present in plants, either free or as lignin building blocks, such as sinapic acid, or as flavonoids such as catechin and dopamine. Phenolic compounds with 1,2-benzenediol and 1,2,3-benzenetriol moieties yield the highest release of oxidized and non-oxidized glucooligosaccharides from cellulose compared to monophenols or sulfur-containing compounds. Lytic polysaccharide monooxygenase (LPMO) that depolymerizes crystalline and amorphous polysaccharides via the oxidation of scissile alpha- or beta-(1-4)-glycosidic bonds, yielding C4 oxidation products. Catalysis by LPMOs requires the reduction of the active-site copper from Cu(II) to Cu(I) by a reducing agent and H(2)O(2) or O(2) as a cosubstrate. Shows oxidative cleavage of beta-(1-3, 1-4)-glucan from oat spelt or xyloglucan from tamarind seed, in addition to cellulose. The polypeptide is AA9 family lytic polysaccharide monooxygenase C (Thermothelomyces thermophilus (strain ATCC 42464 / BCRC 31852 / DSM 1799) (Sporotrichum thermophile)).